Consider the following 505-residue polypeptide: Flagellin (505 aa).

It belongs to the bacterial flagellin family.

The protein resides in the secreted. The protein localises to the bacterial flagellum. Functionally, flagellin is the subunit protein which polymerizes to form the filaments of bacterial flagella. This is Flagellin (fliC) from Salmonella muenchen.